Consider the following 310-residue polypeptide: Methionyl-tRNA formyltransferase (310 aa).

109 to 112 (SLLP) provides a ligand contact to (6S)-5,6,7,8-tetrahydrofolate.

It belongs to the Fmt family.

The enzyme catalyses L-methionyl-tRNA(fMet) + (6R)-10-formyltetrahydrofolate = N-formyl-L-methionyl-tRNA(fMet) + (6S)-5,6,7,8-tetrahydrofolate + H(+). In terms of biological role, attaches a formyl group to the free amino group of methionyl-tRNA(fMet). The formyl group appears to play a dual role in the initiator identity of N-formylmethionyl-tRNA by promoting its recognition by IF2 and preventing the misappropriation of this tRNA by the elongation apparatus. In Pseudomonas putida (strain GB-1), this protein is Methionyl-tRNA formyltransferase.